We begin with the raw amino-acid sequence, 769 residues long: Scarecrow-like protein 14 (769 aa).

Disordered regions lie at residues Met-1 to Leu-23, Pro-128 to Ser-157, Thr-279 to Asn-320, and Thr-364 to Lys-388. The GRAS domain occupies Asn-384–Val-765. Positions Ala-391–Gln-451 are leucine repeat I (LRI). Residues Tyr-470–Gly-536 are VHIID. A VHIID motif is present at residues Ile-501–Asp-505. Residues Glu-552–Asp-584 are leucine repeat II (LRII). Residues Val-593 to Asn-687 form a PFYRE region. Residues Ala-690–Val-765 are SAW.

Belongs to the GRAS family. Expressed in roots, shoots, flowers and siliques.

Its subcellular location is the nucleus. In terms of biological role, probable transcription factor involved in plant development. This Arabidopsis thaliana (Mouse-ear cress) protein is Scarecrow-like protein 14 (SCL14).